Consider the following 223-residue polypeptide: Cytidylate kinase (223 aa).

Residue 10 to 18 coordinates ATP; that stretch reads GPASSGKST.

The protein belongs to the cytidylate kinase family. Type 1 subfamily.

It is found in the cytoplasm. It carries out the reaction CMP + ATP = CDP + ADP. The enzyme catalyses dCMP + ATP = dCDP + ADP. The polypeptide is Cytidylate kinase (Streptococcus pneumoniae (strain Taiwan19F-14)).